We begin with the raw amino-acid sequence, 322 residues long: MSNPNNGAEWQQVEADQLDSGLYYGRFALSPLTAKQASLLKKGLPEALLTEILCLRFTHAKIQNECVNLMNIVGIQESLDEILKNFGKIILTGKLEEFVGKGPFVAILDVRGPLNAMAVDIELPPGIKVEIETQHIATITEPIPFVVELKIELVSSTSKGETGITDEEGFSIDPNPPIQKVDTSIQCYDYQGEPFQTLFLDIWTDRTIHPHEALAQASRKIFGLLSLVFQAEYFQYNELENGLRYGKFCLYPMTKEQFQWIQTALNEALALDMSGESKHEGPVTDEEGDSIDPTFTPVQKWDITMNSYQYSGETFQGLLSRF.

Residues 1–232 (MSNPNNGAEW…GLLSLVFQAE (232 aa)) form an alpha N-terminal domain (alpha-NTD) region. Positions 280–322 (EGPVTDEEGDSIDPTFTPVQKWDITMNSYQYSGETFQGLLSRF) are alpha C-terminal domain (alpha-CTD).

It belongs to the RNA polymerase alpha chain family. In terms of assembly, in plastids the minimal PEP RNA polymerase catalytic core is composed of four subunits: alpha, beta, beta', and beta''. When a (nuclear-encoded) sigma factor is associated with the core the holoenzyme is formed, which can initiate transcription.

Its subcellular location is the plastid. The protein localises to the chloroplast. It carries out the reaction RNA(n) + a ribonucleoside 5'-triphosphate = RNA(n+1) + diphosphate. Its function is as follows. DNA-dependent RNA polymerase catalyzes the transcription of DNA into RNA using the four ribonucleoside triphosphates as substrates. The polypeptide is Putative DNA-directed RNA polymerase subunit alpha-like 2 (rpoAL2-A) (Pelargonium hortorum (Common geranium)).